Reading from the N-terminus, the 247-residue chain is GTP cyclohydrolase 1 type 2 homolog (247 aa).

His63, His64, Asp101, His215, and Glu219 together coordinate a divalent metal cation.

It belongs to the GTP cyclohydrolase I type 2/NIF3 family. As to quaternary structure, homohexamer.

The sequence is that of GTP cyclohydrolase 1 type 2 homolog from Buchnera aphidicola subsp. Schizaphis graminum (strain Sg).